Here is a 434-residue protein sequence, read N- to C-terminus: Trigger factor (434 aa).

Positions glycine 163–proline 248 constitute a PPIase FKBP-type domain.

The protein belongs to the FKBP-type PPIase family. Tig subfamily.

The protein resides in the cytoplasm. It catalyses the reaction [protein]-peptidylproline (omega=180) = [protein]-peptidylproline (omega=0). Its function is as follows. Involved in protein export. Acts as a chaperone by maintaining the newly synthesized protein in an open conformation. Functions as a peptidyl-prolyl cis-trans isomerase. In Methylibium petroleiphilum (strain ATCC BAA-1232 / LMG 22953 / PM1), this protein is Trigger factor.